The chain runs to 47 residues: Wound-induced basic protein (47 aa).

A disordered region spans residues 1-47 (MIYDVNSPLFRSFLSQKGGSSDKRKTEEQKPKEHRPKASENKPIMTE). Residues 20–40 (SSDKRKTEEQKPKEHRPKASE) show a composition bias toward basic and acidic residues.

Abundant in radicals and epicotyls of seedlings and higher in the roots than in stems and leaves of mature plants.

The sequence is that of Wound-induced basic protein (PR4) from Phaseolus vulgaris (Kidney bean).